Reading from the N-terminus, the 877-residue chain is Alanine--tRNA ligase (877 aa).

Zn(2+) is bound by residues H564, H568, C666, and H670.

It belongs to the class-II aminoacyl-tRNA synthetase family. The cofactor is Zn(2+).

The protein localises to the cytoplasm. It catalyses the reaction tRNA(Ala) + L-alanine + ATP = L-alanyl-tRNA(Ala) + AMP + diphosphate. Functionally, catalyzes the attachment of alanine to tRNA(Ala) in a two-step reaction: alanine is first activated by ATP to form Ala-AMP and then transferred to the acceptor end of tRNA(Ala). Also edits incorrectly charged Ser-tRNA(Ala) and Gly-tRNA(Ala) via its editing domain. This chain is Alanine--tRNA ligase, found in Pelotomaculum thermopropionicum (strain DSM 13744 / JCM 10971 / SI).